Reading from the N-terminus, the 2048-residue chain is Myoferlin (2048 aa).

In terms of domain architecture, C2 1 spans 1–101 (MLRVIVESAT…IGDQNRSLPY (101 aa)). The Cytoplasmic portion of the chain corresponds to 1 to 2012 (MLRVIVESAT…MRFIVWRRFK (2012 aa)). Residues 124 to 176 (YTPPSAPHPNDPSGTSVPGMGEEEEEDQGDEDRVDGIVRGPGPKGPSGTVSEA) form a disordered region. The span at 144 to 156 (GEEEEEDQGDEDR) shows a compositional bias: acidic residues. Phosphoserine occurs at positions 170 and 174. 2 C2 domains span residues 183 to 300 (TKGK…RKWL) and 339 to 475 (DSDD…EATT). Positions 186 to 281 (KSSRRMLSNK…RADCLMGEFK (96 aa)) are necessary for interaction with EHD2. Ca(2+) contacts are provided by Asp-390, Asp-396, Asp-444, Asp-446, and Asp-452. Residues Lys-540 and Lys-871 each carry the N6-acetyllysine modification. 2 consecutive C2 domains span residues 1110 to 1238 (GANT…LLWH) and 1269 to 1397 (LPSQ…GKED). The Ca(2+) site is built by Asp-1142, Asp-1148, Asp-1204, and Asp-1206. Lys-1494 bears the N6-acetyllysine mark. 2 C2 domains span residues 1523 to 1641 (PAPP…SHCG) and 1759 to 1907 (GPPG…EKCS). Residues Asp-1556, Asp-1562, Asp-1611, Asp-1613, Asp-1878, Ser-1881, and Asp-1884 each coordinate Ca(2+). The span at 1964-1975 (EADERPAGKGRS) shows a compositional bias: basic and acidic residues. Residues 1964–1986 (EADERPAGKGRSEPNMNPKLDPP) form a disordered region. A helical membrane pass occupies residues 2013-2033 (WVIIGLLLLLILLLFVAVLLY). Residues 2034 to 2048 (SLPNYLSMKIVRPNA) lie on the Extracellular side of the membrane.

This sequence belongs to the ferlin family. In terms of assembly, interacts with EHD1. Interacts with EHD2; the interaction is direct. Interacts with DNM2 and KDR. Interacts with RIPOR2. The cofactor is Ca(2+). In terms of tissue distribution, expressed in myoblasts (at protein level). Expressed in endothelial cells.

Its subcellular location is the cell membrane. The protein resides in the nucleus membrane. It is found in the cytoplasmic vesicle membrane. Its function is as follows. Calcium/phospholipid-binding protein that plays a role in the plasmalemma repair mechanism of endothelial cells that permits rapid resealing of membranes disrupted by mechanical stress. Involved in endocytic recycling. Implicated in VEGF signal transduction by regulating the levels of the receptor KDR. This chain is Myoferlin (Myof), found in Mus musculus (Mouse).